The chain runs to 344 residues: GTPase Obg (344 aa).

Residues 1-159 (MKFLDEAKVY…MWLILRLKLI (159 aa)) form the Obg domain. The region spanning 160 to 327 (ADAGLVGLPN…ALRAIQAQLD (168 aa)) is the OBG-type G domain. Residues 166-173 (GLPNAGKS), 191-195 (FTTLH), 212-215 (DIPG), 279-282 (SKAD), and 308-310 (SAA) contribute to the GTP site. Residues Ser-173 and Thr-193 each contribute to the Mg(2+) site.

Belongs to the TRAFAC class OBG-HflX-like GTPase superfamily. OBG GTPase family. In terms of assembly, monomer. It depends on Mg(2+) as a cofactor.

Its subcellular location is the cytoplasm. Functionally, an essential GTPase which binds GTP, GDP and possibly (p)ppGpp with moderate affinity, with high nucleotide exchange rates and a fairly low GTP hydrolysis rate. Plays a role in control of the cell cycle, stress response, ribosome biogenesis and in those bacteria that undergo differentiation, in morphogenesis control. The polypeptide is GTPase Obg (Methylorubrum populi (strain ATCC BAA-705 / NCIMB 13946 / BJ001) (Methylobacterium populi)).